A 218-amino-acid polypeptide reads, in one-letter code: MNATSTPSLPYDTNRLRELAHLLIGTISEFAQAGWTPATSSNFSHRLDEHHVAITVSGRDKRCLREEDIIAVDLDGNAVGHPHTPSAETLLHTQLYRRFPEIGCVLHTHSLTQTVASRVYAGAGHISLKDYELLKAFEGHSTHETTLDVPVFCNTQNMNILAAQVDTLLDKQRMWGYLINGHGMYTWGNTLADARRHLEALEFLLHCELDLLKLRGYL.

Zn(2+)-binding residues include His-107 and His-109.

The protein belongs to the aldolase class II family. MtnB subfamily. Zn(2+) is required as a cofactor.

It carries out the reaction 5-(methylsulfanyl)-D-ribulose 1-phosphate = 5-methylsulfanyl-2,3-dioxopentyl phosphate + H2O. It functions in the pathway amino-acid biosynthesis; L-methionine biosynthesis via salvage pathway; L-methionine from S-methyl-5-thio-alpha-D-ribose 1-phosphate: step 2/6. Functionally, catalyzes the dehydration of methylthioribulose-1-phosphate (MTRu-1-P) into 2,3-diketo-5-methylthiopentyl-1-phosphate (DK-MTP-1-P). The sequence is that of Methylthioribulose-1-phosphate dehydratase from Xylella fastidiosa (strain M12).